The sequence spans 548 residues: Probable malate:quinone oxidoreductase (548 aa).

The protein belongs to the MQO family. FAD is required as a cofactor.

It carries out the reaction (S)-malate + a quinone = a quinol + oxaloacetate. The protein operates within carbohydrate metabolism; tricarboxylic acid cycle; oxaloacetate from (S)-malate (quinone route): step 1/1. The sequence is that of Probable malate:quinone oxidoreductase from Escherichia coli (strain SE11).